Here is a 798-residue protein sequence, read N- to C-terminus: Neuroligin-1 (798 aa).

Residues 1–17 (MERIYLLLLLFLPRIRS) form the signal peptide. The Extracellular segment spans residues 18 to 685 (YDVRSVTTSW…AAGSFTGKAL (668 aa)). Cysteine 86 and cysteine 125 form a disulfide bridge. N-linked (GlcNAc...) asparagine glycosylation is found at asparagine 164, asparagine 292, and asparagine 315. A disulfide bridge connects residues cysteine 288 and cysteine 307. The tract at residues 636 to 676 (ANLPFPPPPMPPSPPPELTTKPKPSESPTTLQTTTESEKAA) is disordered. The span at 639–652 (PFPPPPMPPSPPPE) shows a compositional bias: pro residues. Residues 653 to 665 (LTTKPKPSESPTT) show a composition bias toward low complexity. Residues 686 to 706 (GGVIFIGCGFLIMNVCLLIAV) traverse the membrane as a helical segment. Residues 707-798 (RREWGKKRRN…QAPTLEEIQV (92 aa)) are Cytoplasmic-facing. A disordered region spans residues 731–765 (HGGGAEQYNSLNSPEPLLSASHKNSTSMRPAGISP).

Belongs to the type-B carboxylesterase/lipase family. In terms of assembly, interacts (via extracellular domain) with isoform b of madd-4; the interaction is required for the localization to postsynaptic domains. Interacts with unc-49.

Its subcellular location is the cell membrane. It localises to the synapse. In terms of biological role, probable neuronal cell surface protein thought to be involved in cell-cell-interactions by forming intercellular junctions through binding to beta-neurexins. Plays a role in the clustering of the GABA(A) receptor unc-49 at postsynaptic sites in neuromuscular junctions (NMJs) via the interaction with madd-4 and neurexin nrx-1 and is thereby required for normal GABAergic synaptic transmission. This is Neuroligin-1 (nlg-1) from Caenorhabditis elegans.